Here is a 313-residue protein sequence, read N- to C-terminus: Olfactory receptor 5D18 (313 aa).

At 1–26 (MLLTDRNTSGTTFTLLGFSDYPELQV) the chain is on the extracellular side. A glycan (N-linked (GlcNAc...) asparagine) is linked at Asn-7. Residues 27–47 (PLFLVFLAIYNVTVLGNIGLI) form a helical membrane-spanning segment. Residues 48 to 55 (VIIKINPK) lie on the Cytoplasmic side of the membrane. The helical transmembrane segment at 56–76 (LHTPMYFFLSQLSFVDFCYSS) threads the bilayer. The Extracellular segment spans residues 77–100 (IIAPKMLVNLVVKDRTISFLGCVV). Cysteines 98 and 190 form a disulfide. The chain crosses the membrane as a helical span at residues 101–121 (QFFFFCTFVVTESFLLAVMAY). At 122 to 140 (DRFVAICNPLLYTVNMSQK) the chain is on the cytoplasmic side. A helical transmembrane segment spans residues 141-161 (LCVLLVVGSYAWGVSCSLELT). Residues 162-197 (CSALKLCFHGFNTINHFFCEFSSLLSLSCSDTYINQ) are Extracellular-facing. Residues 198–218 (WLLFFLATFNEISTLLIVLTS) form a helical membrane-spanning segment. Residues 219 to 238 (YAFIVVTILKMRSVSGRRKA) lie on the Cytoplasmic side of the membrane. A helical transmembrane segment spans residues 239-259 (FSTCASHLTAITIFHGTILFL). Topologically, residues 260–272 (YCVPNSKNSRHTV) are extracellular. Residues 273–293 (KVASVFYTVVIPMLNPLIYSL) traverse the membrane as a helical segment. Over 294–313 (RNKDVKDTVTEILDTKVFSY) the chain is Cytoplasmic.

The protein belongs to the G-protein coupled receptor 1 family.

It localises to the cell membrane. Odorant receptor. The chain is Olfactory receptor 5D18 (OR5D18) from Homo sapiens (Human).